Consider the following 417-residue polypeptide: Gamma-glutamyl phosphate reductase (417 aa).

This sequence belongs to the gamma-glutamyl phosphate reductase family.

The protein localises to the cytoplasm. The enzyme catalyses L-glutamate 5-semialdehyde + phosphate + NADP(+) = L-glutamyl 5-phosphate + NADPH + H(+). It functions in the pathway amino-acid biosynthesis; L-proline biosynthesis; L-glutamate 5-semialdehyde from L-glutamate: step 2/2. Its function is as follows. Catalyzes the NADPH-dependent reduction of L-glutamate 5-phosphate into L-glutamate 5-semialdehyde and phosphate. The product spontaneously undergoes cyclization to form 1-pyrroline-5-carboxylate. The sequence is that of Gamma-glutamyl phosphate reductase from Serratia proteamaculans (strain 568).